The primary structure comprises 183 residues: Transmembrane protein 154 (183 aa).

Positions 1-22 (MQAPRAALVFALVIALVPVGRG) are cleaved as a signal peptide. Residues 23 to 75 (NYEELENSGDTTVESERPNKVTIPSTFAAVTIKETLNANINSTNFAPDENQLE) are Extracellular-facing. The helical transmembrane segment at 76-96 (FILMVLIPLILLVLLLLSVVF) threads the bilayer. Residues 97 to 183 (LATYYKRKRT…SNHNPSDSES (87 aa)) are Cytoplasmic-facing. The disordered stretch occupies residues 163-183 (ECLPTLKEEKESNHNPSDSES). Residue Ser-179 is modified to Phosphoserine.

It localises to the membrane. This Homo sapiens (Human) protein is Transmembrane protein 154 (TMEM154).